The primary structure comprises 175 residues: Calcineurin subunit B (175 aa).

4 consecutive EF-hand domains span residues 21-56 (AEIE…SANP), 58-88 (AKRI…FSGR), 90-125 (ETDA…MVGT), and 131-166 (QLQQ…TEVI). Ca(2+) contacts are provided by Asp34, Asp36, Ser38, Ser40, Glu45, Asp66, Asp68, Ser70, Asp72, Glu77, Asp103, Asp105, Asp107, Tyr109, Glu114, Asp144, Asp146, Asp148, Lys150, and Glu155.

This sequence belongs to the calcineurin regulatory subunit family. Composed of a catalytic subunit (A) and a regulatory subunit (B).

In terms of biological role, regulatory subunit of calcineurin, a calcium-dependent, calmodulin stimulated protein phosphatase. Confers calcium sensitivity. The sequence is that of Calcineurin subunit B (CNB1) from Kluyveromyces lactis (strain ATCC 8585 / CBS 2359 / DSM 70799 / NBRC 1267 / NRRL Y-1140 / WM37) (Yeast).